A 341-amino-acid chain; its full sequence is NADH-quinone oxidoreductase subunit H 1 (341 aa).

Transmembrane regions (helical) follow at residues 7-27 (IILTIAAQGLLVIAFVMISLL), 46-66 (PNVVGAFGLLQTVADAAKYIF), 80-100 (FFLAPLISFVLAVLAWAVIPF), 111-131 (VAILFVFAASSLEVYGVIMGG), 157-177 (LGLIIIGIIISTGSMNLSHIV), 183-203 (AFGLFNWYWLPHLPMVALFFI), 244-264 (YIAIFLMCALMSLLFFGGWLS), 273-293 (VFWMVAKMAFFFFLFAMVKAI), and 305-325 (IGWKVFLPFSLGWVVLVAFLA).

This sequence belongs to the complex I subunit 1 family. NDH-1 is composed of 14 different subunits. Subunits NuoA, H, J, K, L, M, N constitute the membrane sector of the complex.

It is found in the cell inner membrane. The catalysed reaction is a quinone + NADH + 5 H(+)(in) = a quinol + NAD(+) + 4 H(+)(out). In terms of biological role, NDH-1 shuttles electrons from NADH, via FMN and iron-sulfur (Fe-S) centers, to quinones in the respiratory chain. The immediate electron acceptor for the enzyme in this species is believed to be ubiquinone. Couples the redox reaction to proton translocation (for every two electrons transferred, four hydrogen ions are translocated across the cytoplasmic membrane), and thus conserves the redox energy in a proton gradient. This subunit may bind ubiquinone. The sequence is that of NADH-quinone oxidoreductase subunit H 1 from Cereibacter sphaeroides (strain ATCC 17029 / ATH 2.4.9) (Rhodobacter sphaeroides).